Here is a 345-residue protein sequence, read N- to C-terminus: MTVIVPIHGPAPALAPAPERVGVLLVNLGTPDSCDTKGVRVYLREFLSDPRVIENQGIFWKLALNGIILNTRPARKAKDYQKIWNQEKNESPLKTITRAQAEKLAASLSDRSHLVVDWAMRYGNPSMRDRIEALVAQGCSRLLVVPLYPQYSAATSATVCDQAFRVLRELRAQPTLRVTPPYYRDDAYIDALANSIHAHLATLPFKPEMIVASFHGMPQAYIEKGDPYQSQCVATVDALRERMGLDDKKLLLTFQSRFGFDQWLQPYTDKTIEKLAKDGVRKLAVVMPGFAADCLETLEEIAQENAEIFMHNGGEEFSAIPCLNDSADGIAVIRQLVMRELEGWL.

His215 and Glu296 together coordinate Fe cation.

This sequence belongs to the ferrochelatase family.

It localises to the cytoplasm. It catalyses the reaction heme b + 2 H(+) = protoporphyrin IX + Fe(2+). It participates in porphyrin-containing compound metabolism; protoheme biosynthesis; protoheme from protoporphyrin-IX: step 1/1. Its function is as follows. Catalyzes the ferrous insertion into protoporphyrin IX. The protein is Ferrochelatase of Rhodopseudomonas palustris (strain HaA2).